The following is a 410-amino-acid chain: Caspase-1 (410 aa).

Residues 1 to 91 form the CARD domain; sequence MADKVLKGKR…HLAETLGLSS (91 aa). Residues 1–119 constitute a propeptide that is removed on maturation; sequence MADKVLKGKR…PLPASVNNMP (119 aa). Residues 88-104 show a composition bias toward polar residues; that stretch reads GLSSSPQSGNSQNTTDS. The tract at residues 88-125 is disordered; the sequence is GLSSSPQSGNSQNTTDSEVAFPPLPASVNNMPGPAEPE. Active-site residues include H235 and C284. Residues 297–322 constitute a propeptide that is removed on maturation; sequence SPAAPMDSTSQMGSSLSQVGDNLEDD.

The protein belongs to the peptidase C14A family. Heterotetramer that consists of two anti-parallel arranged heterodimers, each one formed by a 20 kDa (Caspase-1 subunit p20) and a 10 kDa (Caspase-1 subunit p10) subunit. May be a component of the inflammasome, a protein complex which also includes PYCARD, CARD8 and NLRP2 and whose function would be the activation of pro-inflammatory caspases. Component of the AIM2 PANoptosome complex, a multiprotein complex that drives inflammatory cell death (PANoptosis). Both the p10 and p20 subunits interact with MEFV. Interacts with CARD17P/INCA and CARD18. Interacts with SERPINB1; this interaction regulates CASP1 activity. As to quaternary structure, heterotetramer that consists of two anti-parallel arranged heterodimers, each one formed by a 20 kDa (Caspase-1 subunit p20) and a 10 kDa (Caspase-1 subunit p10) subunit. Post-translationally, the two subunits are derived from the precursor sequence by an autocatalytic mechanism. Ubiquitinated via 'Lys-11'-linked polyubiquitination. Deubiquitinated by USP8.

The protein localises to the cytoplasm. Its subcellular location is the cell membrane. It carries out the reaction Strict requirement for an Asp residue at position P1 and has a preferred cleavage sequence of Tyr-Val-Ala-Asp-|-.. Functionally, thiol protease involved in a variety of inflammatory processes by proteolytically cleaving other proteins, such as the precursors of the inflammatory cytokines interleukin-1 beta (IL1B) and interleukin 18 (IL18) as well as the pyroptosis inducer Gasdermin-D (GSDMD), into active mature peptides. Plays a key role in cell immunity as an inflammatory response initiator: once activated through formation of an inflammasome complex, it initiates a pro-inflammatory response through the cleavage of the two inflammatory cytokines IL1B and IL18, releasing the mature cytokines which are involved in a variety of inflammatory processes. Cleaves a tetrapeptide after an Asp residue at position P1. Also initiates pyroptosis, a programmed lytic cell death pathway, through cleavage of GSDMD. In contrast to cleavage of interleukin IL1B, recognition and cleavage of GSDMD is not strictly dependent on the consensus cleavage site but depends on an exosite interface on CASP1 that recognizes and binds the Gasdermin-D, C-terminal (GSDMD-CT) part. Cleaves and activates CASP7 in response to bacterial infection, promoting plasma membrane repair. Upon inflammasome activation, during DNA virus infection but not RNA virus challenge, controls antiviral immunity through the cleavage of CGAS, rendering it inactive. In apoptotic cells, cleaves SPHK2 which is released from cells and remains enzymatically active extracellularly. This Felis catus (Cat) protein is Caspase-1 (CASP1).